The sequence spans 346 residues: Elongation factor Ts (346 aa).

Residues 80–83 (TDFV) are involved in Mg(2+) ion dislocation from EF-Tu.

Belongs to the EF-Ts family.

The protein resides in the cytoplasm. Functionally, associates with the EF-Tu.GDP complex and induces the exchange of GDP to GTP. It remains bound to the aminoacyl-tRNA.EF-Tu.GTP complex up to the GTP hydrolysis stage on the ribosome. The protein is Elongation factor Ts (tsf) of Streptococcus pneumoniae (strain ATCC BAA-255 / R6).